The chain runs to 274 residues: Ribosomal RNA small subunit methyltransferase A (274 aa).

Residues Asn-27, Leu-29, Gly-54, Glu-75, Asp-100, and Asn-121 each coordinate S-adenosyl-L-methionine.

This sequence belongs to the class I-like SAM-binding methyltransferase superfamily. rRNA adenine N(6)-methyltransferase family. RsmA subfamily.

It is found in the cytoplasm. The enzyme catalyses adenosine(1518)/adenosine(1519) in 16S rRNA + 4 S-adenosyl-L-methionine = N(6)-dimethyladenosine(1518)/N(6)-dimethyladenosine(1519) in 16S rRNA + 4 S-adenosyl-L-homocysteine + 4 H(+). Specifically dimethylates two adjacent adenosines (A1518 and A1519) in the loop of a conserved hairpin near the 3'-end of 16S rRNA in the 30S particle. May play a critical role in biogenesis of 30S subunits. This Acinetobacter baylyi (strain ATCC 33305 / BD413 / ADP1) protein is Ribosomal RNA small subunit methyltransferase A.